The chain runs to 238 residues: Riboflavin synthase (238 aa).

Lumazine-binding repeat units follow at residues 1–103 and 104–205; these read MFTG…FGGH and YVQG…EKQI. Residues 4–6, 54–56, and 68–73 each bind 2,4-dihydroxypteridine; these read GIV, CLT, and GISPET. A Phosphoserine modification is found at S95. Residues 107–109, K143, 152–154, and 170–175 each bind 2,4-dihydroxypteridine; these read GHV, SLT, and SMIKHT.

In terms of assembly, homotrimer.

It carries out the reaction 2 6,7-dimethyl-8-(1-D-ribityl)lumazine + H(+) = 5-amino-6-(D-ribitylamino)uracil + riboflavin. It functions in the pathway cofactor biosynthesis; riboflavin biosynthesis; riboflavin from 2-hydroxy-3-oxobutyl phosphate and 5-amino-6-(D-ribitylamino)uracil: step 2/2. In terms of biological role, catalyzes the dismutation of two molecules of 6,7-dimethyl-8-ribityllumazine, resulting in the formation of riboflavin and 5-amino-6-(D-ribitylamino)uracil. This is Riboflavin synthase from Saccharomyces cerevisiae (strain ATCC 204508 / S288c) (Baker's yeast).